The chain runs to 315 residues: Inosine-uridine preferring nucleoside hydrolase (315 aa).

Position 10 (Asp-10) interacts with Ca(2+). Substrate is bound at residue Asp-14. Residues Asp-15 and Thr-126 each contribute to the Ca(2+) site. Substrate-binding residues include Asn-160, Glu-166, and Asn-168. Residue His-241 is the Proton donor of the active site. Asp-242 lines the Ca(2+) pocket.

In terms of assembly, homotetramer. Requires Ca(2+) as cofactor.

It catalyses the reaction inosine + H2O = hypoxanthine + D-ribose. It carries out the reaction uridine + H2O = D-ribose + uracil. The protein operates within purine metabolism; purine nucleoside salvage. Functionally, catalyzes the hydrolysis of the N-glycosidic bond of commonly occurring purine and pyrimidine nucleosides into ribose and the base, but has a preference for inosine and uridine as substrates. Is not active on thymidine and 2'-deoxynucleosides. Functions in purine salvage from the blood of the host, a fundamental pathway since protozoan parasites such as C.fasciculata are incapable of de novo purine biosynthesis. The sequence is that of Inosine-uridine preferring nucleoside hydrolase (IUNH) from Crithidia fasciculata.